The primary structure comprises 261 residues: Cytochrome c oxidase subunit 3 (261 aa).

Residues 1–15 (MTHQTHAYHMVNPSP) lie on the Mitochondrial matrix side of the membrane. Residues 16–34 (WPLTGALSALLMTSGLAMW) traverse the membrane as a helical segment. The Mitochondrial intermembrane portion of the chain corresponds to 35 to 40 (FHFNSP). Residues 41–66 (SLLLIGLVTNTLTMYQWWRDIVREGT) form a helical membrane-spanning segment. The Mitochondrial matrix segment spans residues 67–72 (FQGHHT). The chain crosses the membrane as a helical span at residues 73–105 (PIVQKGLRYGMILFIISEVFFFAGFFWAFYHSS). The Mitochondrial intermembrane portion of the chain corresponds to 106–128 (LAPTPELGGCWPPTGINPLNPLE). A helical membrane pass occupies residues 129 to 152 (VPLLNTSVLLASGVSITWAHHSLM). At 153-155 (EGN) the chain is on the mitochondrial matrix side. A helical membrane pass occupies residues 156–183 (RKNMQQALAITILLGIYFTLLQASEYYE). Residues 184–190 (TSFTISD) lie on the Mitochondrial intermembrane side of the membrane. The chain crosses the membrane as a helical span at residues 191 to 223 (GVYGSTFFMATGFHGLHVIIGSTFLTVCLLRQF). Topologically, residues 224–232 (NFHFTSNHH) are mitochondrial matrix. A helical membrane pass occupies residues 233–256 (FGFEAAAWYWHFVDVVWLFLYVSI). The Mitochondrial intermembrane portion of the chain corresponds to 257–261 (YWWGS).

This sequence belongs to the cytochrome c oxidase subunit 3 family. In terms of assembly, component of the cytochrome c oxidase (complex IV, CIV), a multisubunit enzyme composed of 14 subunits. The complex is composed of a catalytic core of 3 subunits MT-CO1, MT-CO2 and MT-CO3, encoded in the mitochondrial DNA, and 11 supernumerary subunits COX4I, COX5A, COX5B, COX6A, COX6B, COX6C, COX7A, COX7B, COX7C, COX8 and NDUFA4, which are encoded in the nuclear genome. The complex exists as a monomer or a dimer and forms supercomplexes (SCs) in the inner mitochondrial membrane with NADH-ubiquinone oxidoreductase (complex I, CI) and ubiquinol-cytochrome c oxidoreductase (cytochrome b-c1 complex, complex III, CIII), resulting in different assemblies (supercomplex SCI(1)III(2)IV(1) and megacomplex MCI(2)III(2)IV(2)).

The protein resides in the mitochondrion inner membrane. The enzyme catalyses 4 Fe(II)-[cytochrome c] + O2 + 8 H(+)(in) = 4 Fe(III)-[cytochrome c] + 2 H2O + 4 H(+)(out). Component of the cytochrome c oxidase, the last enzyme in the mitochondrial electron transport chain which drives oxidative phosphorylation. The respiratory chain contains 3 multisubunit complexes succinate dehydrogenase (complex II, CII), ubiquinol-cytochrome c oxidoreductase (cytochrome b-c1 complex, complex III, CIII) and cytochrome c oxidase (complex IV, CIV), that cooperate to transfer electrons derived from NADH and succinate to molecular oxygen, creating an electrochemical gradient over the inner membrane that drives transmembrane transport and the ATP synthase. Cytochrome c oxidase is the component of the respiratory chain that catalyzes the reduction of oxygen to water. Electrons originating from reduced cytochrome c in the intermembrane space (IMS) are transferred via the dinuclear copper A center (CU(A)) of subunit 2 and heme A of subunit 1 to the active site in subunit 1, a binuclear center (BNC) formed by heme A3 and copper B (CU(B)). The BNC reduces molecular oxygen to 2 water molecules using 4 electrons from cytochrome c in the IMS and 4 protons from the mitochondrial matrix. This is Cytochrome c oxidase subunit 3 (MT-CO3) from Oryctolagus cuniculus (Rabbit).